The following is a 360-amino-acid chain: Glutamate 5-kinase (360 aa).

Lys-7 serves as a coordination point for ATP. 3 residues coordinate substrate: Ser-47, Asp-134, and Asn-146. ATP is bound by residues 166–167 (TD) and 210–216 (TGGISTK). A PUA domain is found at 275-356 (VGKITLDDGA…SSIIVVHRDV (82 aa)).

Belongs to the glutamate 5-kinase family.

The protein resides in the cytoplasm. It catalyses the reaction L-glutamate + ATP = L-glutamyl 5-phosphate + ADP. Its pathway is amino-acid biosynthesis; L-proline biosynthesis; L-glutamate 5-semialdehyde from L-glutamate: step 1/2. Catalyzes the transfer of a phosphate group to glutamate to form L-glutamate 5-phosphate. This is Glutamate 5-kinase from Prochlorococcus marinus (strain MIT 9301).